Here is a 547-residue protein sequence, read N- to C-terminus: Sodium-coupled neutral amino acid transporter 4 (547 aa).

Topologically, residues Met-1–Gly-104 are extracellular. Ser-49 is modified (phosphoserine). A helical transmembrane segment spans residues Ile-105–Leu-125. Over Leu-126 to Lys-151 the chain is Cytoplasmic. The chain crosses the membrane as a helical span at residues Ile-152 to Ile-172. The Extracellular portion of the chain corresponds to Ile-173–Tyr-195. A helical transmembrane segment spans residues Leu-196 to Leu-216. Residues Lys-217–Gly-220 are Cytoplasmic-facing. The helical transmembrane segment at Tyr-221–Ile-241 threads the bilayer. Topologically, residues Tyr-242–Thr-332 are extracellular. A disulfide bond links Cys-249 and Cys-321. Residues Asn-260, Asn-264, and Asn-276 are each glycosylated (N-linked (GlcNAc...) asparagine). A helical membrane pass occupies residues Ala-333–Tyr-353. Residues Ser-354–Asn-369 are Cytoplasmic-facing. A helical transmembrane segment spans residues Ile-370 to Phe-390. The Extracellular portion of the chain corresponds to Tyr-391–Ala-411. A helical membrane pass occupies residues Leu-412–Phe-432. Residues Pro-433 to His-453 lie on the Cytoplasmic side of the membrane. The helical transmembrane segment at Phe-454 to Ile-474 threads the bilayer. Topologically, residues Lys-475 to Tyr-476 are extracellular. The chain crosses the membrane as a helical span at residues Ile-477 to Phe-497. At Tyr-498–Gly-514 the chain is on the cytoplasmic side. A helical membrane pass occupies residues Ala-515–Ile-535. Residues Asp-536–His-547 lie on the Extracellular side of the membrane.

This sequence belongs to the amino acid/polyamine transporter 2 family. Post-translationally, the disulfide bond plays an important role in substrate transport, but has no effect on trafficking to the cell surface. In terms of tissue distribution, expressed predominantly in liver, and at lower level in skeletal muscle.

It localises to the cell membrane. The protein resides in the cell projection. It is found in the microvillus membrane. It carries out the reaction L-alanine(in) + Na(+)(in) = L-alanine(out) + Na(+)(out). The enzyme catalyses L-serine(in) + Na(+)(in) = L-serine(out) + Na(+)(out). The catalysed reaction is glycine(in) + Na(+)(in) = glycine(out) + Na(+)(out). It catalyses the reaction L-cysteine(in) + Na(+)(in) = L-cysteine(out) + Na(+)(out). It carries out the reaction L-asparagine(in) + Na(+)(in) = L-asparagine(out) + Na(+)(out). The enzyme catalyses L-threonine(in) + Na(+)(in) = L-threonine(out) + Na(+)(out). The catalysed reaction is L-proline(in) + Na(+)(in) = L-proline(out) + Na(+)(out). It catalyses the reaction L-methionine(in) + Na(+)(in) = L-methionine(out) + Na(+)(out). It carries out the reaction L-glutamine(in) + Na(+)(in) = L-glutamine(out) + Na(+)(out). The enzyme catalyses L-histidine(in) + Na(+)(in) = L-histidine(out) + Na(+)(out). Its function is as follows. Symporter that cotransports neutral amino acids and sodium ions from the extraccellular to the intracellular side of the cell membrane. The transport is electrogenic, pH dependent and partially tolerates substitution of Na(+) by Li(+). Preferentially transports smaller amino acids, such as glycine, L-alanine, L-serine, L-asparagine and L-threonine, followed by L-cysteine, L-histidine, L-proline and L-glutamine and L-methionine. The sequence is that of Sodium-coupled neutral amino acid transporter 4 from Rattus norvegicus (Rat).